Consider the following 212-residue polypeptide: RNA chaperone ProQ (212 aa).

Residues 114-149 are disordered; that stretch reads RIAKAGKTSAPAANAKKPVKKPVARRPKAAPSAKPV. Over residues 118-129 the composition is skewed to low complexity; that stretch reads AGKTSAPAANAK. A compositionally biased stretch (basic residues) spans 130–141; it reads KPVKKPVARRPK.

Belongs to the ProQ family.

The protein resides in the cytoplasm. Its function is as follows. RNA chaperone with significant RNA binding, RNA strand exchange and RNA duplexing activities. This chain is RNA chaperone ProQ, found in Shewanella piezotolerans (strain WP3 / JCM 13877).